We begin with the raw amino-acid sequence, 188 residues long: Elongation factor P (188 aa).

The protein belongs to the elongation factor P family.

The protein localises to the cytoplasm. It functions in the pathway protein biosynthesis; polypeptide chain elongation. Its function is as follows. Involved in peptide bond synthesis. Stimulates efficient translation and peptide-bond synthesis on native or reconstituted 70S ribosomes in vitro. Probably functions indirectly by altering the affinity of the ribosome for aminoacyl-tRNA, thus increasing their reactivity as acceptors for peptidyl transferase. This chain is Elongation factor P, found in Aeromonas hydrophila subsp. hydrophila (strain ATCC 7966 / DSM 30187 / BCRC 13018 / CCUG 14551 / JCM 1027 / KCTC 2358 / NCIMB 9240 / NCTC 8049).